The chain runs to 912 residues: Multiple C2 and transmembrane domain-containing protein (912 aa).

The segment covering 1–33 (MSRIQYVDQVDQVELDQQQQPGSSSTVSGSTPP) has biased composition (low complexity). Disordered stretches follow at residues 1 to 80 (MSRI…KRAK) and 145 to 165 (SSEG…IGGS). A compositionally biased stretch (polar residues) spans 38-49 (PHGSPSLQQSQR). 3 consecutive C2 domains span residues 218-337 (QANE…HLQL), 371-493 (RNSK…HLML), and 522-637 (ERYK…TLKD). Ca(2+) contacts are provided by Asp252, Asp258, Asp305, Asp307, and Asp313. Residues Asp553, Asp559, Asp605, and Asp607 each contribute to the Ca(2+) site. The next 2 helical transmembrane spans lie at 729–749 (IVAC…LIIL) and 826–846 (LTWL…FVPL). The segment at 887–912 (NQYRELPPSAPTDQTRNNPKKKLKGS) is disordered.

It depends on Ca(2+) as a cofactor. As to expression, motor neurons (at protein level).

Its subcellular location is the endoplasmic reticulum membrane. Calcium sensor which is essential for the stabilization of normal baseline neurotransmitter release and for the induction and long-term maintenance of presynaptic homeostatic plasticity. This chain is Multiple C2 and transmembrane domain-containing protein, found in Drosophila melanogaster (Fruit fly).